Here is a 538-residue protein sequence, read N- to C-terminus: Histone-arginine methyltransferase CARMER (538 aa).

Residues 148 to 457 enclose the SAM-dependent MTase PRMT-type domain; the sequence is ASQYFQFYGY…QSYDVTIDLH (310 aa). The S-adenosyl-L-methionine site is built by Q161, R170, G194, E216, E245, and T273. The residue at position 508 (R508) is an Asymmetric dimethylarginine; by autocatalysis.

Belongs to the class I-like SAM-binding methyltransferase superfamily. Protein arginine N-methyltransferase family. Homodimer. In terms of processing, the dimethylated protein is the major form.

Its subcellular location is the cytoplasm. The protein resides in the nucleus. It catalyses the reaction L-arginyl-[protein] + 2 S-adenosyl-L-methionine = N(omega),N(omega)-dimethyl-L-arginyl-[protein] + 2 S-adenosyl-L-homocysteine + 2 H(+). Functionally, methylates (mono- and asymmetric dimethylation) the guanidino nitrogens of arginyl residues in proteins. May methylate histone H3 at 'Arg-17' and activate transcription via chromatin remodeling. The chain is Histone-arginine methyltransferase CARMER (Art4) from Drosophila virilis (Fruit fly).